We begin with the raw amino-acid sequence, 424 residues long: Hemagglutinin-esterase (424 aa).

An N-terminal signal peptide occupies residues 1-16 (MFLLPRFVLVSCIIGS). Residues 7–127 (FVLVSCIIGS…SNDIWMQNKG (121 aa)) form an esterase domain 1 region. Residues 17–392 (LGFDNPPTNV…PICVYDPLPI (376 aa)) are Virion surface-facing. Ser40 acts as the Nucleophile in catalysis. A disulfide bridge connects residues Cys44 and Cys65. Residues Asn54, Asn89, Asn153, Asn236, and Asn301 are each glycosylated (N-linked (GlcNAc...) asparagine; by host). Intrachain disulfides connect Cys113-Cys162, Cys197-Cys276, and Cys205-Cys249. Residues 128–266 (LFYTQLYKNM…GNYLAISNEL (139 aa)) are receptor binding. The tract at residues 267 to 379 (LLTVPTKAIC…RCPTAADINT (113 aa)) is esterase domain 2. Cys307 and Cys312 are joined by a disulfide. A glycan (N-linked (GlcNAc...) asparagine; by host) is linked at Asn316. Catalysis depends on charge relay system residues Asp326 and His329. An intrachain disulfide couples Cys347 to Cys371. A glycan (N-linked (GlcNAc...) asparagine; by host) is linked at Asn358. Residues 393–413 (ILLGILLGVAVIIIVVLLLYF) traverse the membrane as a helical segment. Over 414–424 (MVDNGTRLHDA) the chain is Intravirion. N-linked (GlcNAc...) asparagine; by host glycosylation is present at Asn417.

The protein belongs to the influenza type C/coronaviruses hemagglutinin-esterase family. As to quaternary structure, homodimer; disulfide-linked. Forms a complex with the M protein in the pre-Golgi. Associates then with S-M complex to form a ternary complex S-M-HE. In terms of processing, N-glycosylated in the host RER.

It localises to the virion membrane. Its subcellular location is the host cell membrane. It carries out the reaction N-acetyl-9-O-acetylneuraminate + H2O = N-acetylneuraminate + acetate + H(+). The catalysed reaction is N-acetyl-4-O-acetylneuraminate + H2O = N-acetylneuraminate + acetate + H(+). Its function is as follows. Structural protein that makes short spikes at the surface of the virus. Contains receptor binding and receptor-destroying activities. Mediates de-O-acetylation of N-acetyl-4-O-acetylneuraminic acid, which is probably the receptor determinant recognized by the virus on the surface of erythrocytes and susceptible cells. This receptor-destroying activity is important for virus release as it probably helps preventing self-aggregation and ensures the efficient spread of the progeny virus from cell to cell. May serve as a secondary viral attachment protein for initiating infection, the spike protein being the major one. May become a target for both the humoral and the cellular branches of the immune system. This is Hemagglutinin-esterase from Bovine coronavirus (strain LSU-94LSS-051) (BCoV-LSU).